A 615-amino-acid polypeptide reads, in one-letter code: Sodium-dependent neutral amino acid transporter B(0)AT3 (615 aa).

Over 1 to 26 the chain is Cytoplasmic; sequence MAQASGMDPLVDIEDERPKWDNKLQY. A helical membrane pass occupies residues 27–47; the sequence is LLSCIGFAVGLGNIWRFPYLC. Topologically, residues 48 to 52 are extracellular; the sequence is QTHGG. The helical transmembrane segment at 53 to 73 threads the bilayer; the sequence is GAFLIPYFIALVFEGIPLFYI. Over 74–105 the chain is Cytoplasmic; that stretch reads ELAIGQRLRRGSIGVWKTISPYLGGVGLGCFS. Residues 106–126 traverse the membrane as a helical segment; it reads VSFLVSLYYNTVLLWVLWFFL. Topologically, residues 127-177 are extracellular; it reads NSFQHPLPWSTCPLDLNRTGFVQECQSSGTVSYFWYRQTLNITSDISNTGT. Asn-143 and Asn-167 each carry an N-linked (GlcNAc...) asparagine glycan. A helical transmembrane segment spans residues 178-198; sequence IQWKLFLCLVACWSTVYLCVI. Residues 199 to 206 lie on the Cytoplasmic side of the membrane; it reads RGIESTGK. A helical membrane pass occupies residues 207–227; the sequence is VIYFTALFPYLVLTIFLIRGL. Over 228–255 the chain is Extracellular; sequence TLPGATEGLIYLFTPNMKTLQNPRVWLD. The chain crosses the membrane as a helical span at residues 256-276; sequence AATQIFFSLSLAFGGHIAFAS. The Cytoplasmic segment spans residues 277-288; that stretch reads YNPPRNNCEKDA. Residues 289–309 traverse the membrane as a helical segment; that stretch reads VIIALVNSMTSLYASIAIFSV. At 310-397 the chain is on the extracellular side; it reads MGFKASNDYG…FTEAVLHMPG (88 aa). Asn-353 is a glycosylation site (N-linked (GlcNAc...) asparagine). The helical transmembrane segment at 398–418 threads the bilayer; that stretch reads ASVWSVLFFGMLFTLGLSSMF. Residues 419–441 lie on the Cytoplasmic side of the membrane; it reads GNMEGVITPLLDMGILPKGIPKE. The chain crosses the membrane as a helical span at residues 442–462; it reads VMTGVICFACFLSAICFTLQS. Residues 463 to 472 are Extracellular-facing; the sequence is GGYWLEIFDS. Residues 473–493 form a helical membrane-spanning segment; that stretch reads FAASLNLIIFAFMEVVGVIHI. Over 494–520 the chain is Cytoplasmic; it reads YGMKRFCDDIEWMTGRRPGLYWQVTWR. Residues 521–541 form a helical membrane-spanning segment; it reads VVSPMLLFGIFLSYIVLLIQT. Residues 542–570 are Extracellular-facing; it reads PPSYKAWNPQYEHFPSREEKFYPGWVQVT. A helical membrane pass occupies residues 571 to 591; it reads CVLLSFLPSLWVPGVALAQLL. At 592–615 the chain is on the cytoplasmic side; that stretch reads SQYKQRWKATHLESGLKLQESRGC.

Belongs to the sodium:neurotransmitter symporter (SNF) (TC 2.A.22) family. SLC6A18 subfamily. As to quaternary structure, interacts with CLTRN; this interaction regulates the trafficking of SLC6A18 to the cell membrane and its activity. As to expression, expressed predominantly in kidney.

Its subcellular location is the apical cell membrane. It localises to the cell membrane. It carries out the reaction L-alanine(out) + chloride(out) + 2 Na(+)(out) = L-alanine(in) + chloride(in) + 2 Na(+)(in). The enzyme catalyses glycine(out) + chloride(out) + 2 Na(+)(out) = glycine(in) + chloride(in) + 2 Na(+)(in). The catalysed reaction is L-methionine(out) + chloride(out) + 2 Na(+)(out) = L-methionine(in) + chloride(in) + 2 Na(+)(in). It catalyses the reaction L-valine(out) + chloride(out) + 2 Na(+)(out) = L-valine(in) + chloride(in) + 2 Na(+)(in). It carries out the reaction L-isoleucine(out) + chloride(out) + 2 Na(+)(out) = L-isoleucine(in) + chloride(in) + 2 Na(+)(in). The enzyme catalyses L-serine(out) + chloride(out) + 2 Na(+)(out) = L-serine(in) + chloride(in) + 2 Na(+)(in). The catalysed reaction is L-leucine(out) + chloride(out) + 2 Na(+)(out) = L-leucine(in) + chloride(in) + 2 Na(+)(in). Functionally, symporter that transports one amino acid molecule together with two sodium and one chloride ions in kidneys and plays a role in the neutral amino acids reabsorption. Preferentially transports neutral amino acids such as L-glycine and L-alanine but also other neutral amino acids. Required CLTRN for cell surface expression and for its amino acid transporter activity. The transport mechanism is pH-independent. This is Sodium-dependent neutral amino acid transporter B(0)AT3 from Mus musculus (Mouse).